Reading from the N-terminus, the 354-residue chain is MRIEKGIGIKNVLKIMCPGTQLREGLENILRAKTGGLLVIGDDEEVMKLVDGGFYINSEYTPSYAYELAKMDGAIVITGDLKKIVCANAQLIPDSSIPTYETGTRHRTAHRVAKQTNNIVIAISQRRNIITMYKGDIKYVLRESSVILGKANQALQTLEKYVAVLERVINNLNLLEFQDLTTLFDVVTAIQRTEMVMRIVEEINMYILELGNEGRLISMQLNELVKHIERDGILLIRDYCKDGLQYNEVYEHIQKLNSSELLELDAVARTLGRGGIPLMDTLISPKGYRMLSKVPRIPSNVIDNLIKEFEELSNIIDADINDLDNVEGIGEARATAIKDGLKRIKEQVSLKKEI.

The DAC domain occupies G6 to S144. ATP contacts are provided by residues G73, L91, and T104–T108.

The protein belongs to the DisA family. As to quaternary structure, homooctamer. Requires Mg(2+) as cofactor.

It catalyses the reaction 2 ATP = 3',3'-c-di-AMP + 2 diphosphate. Participates in a DNA-damage check-point that is active prior to asymmetric division when DNA is damaged. DisA forms globular foci that rapidly scan along the chromosomes during sporulation, searching for lesions. When a lesion is present, DisA pauses at the lesion site. This triggers a cellular response that culminates in a temporary block in sporulation initiation. Functionally, also has diadenylate cyclase activity, catalyzing the condensation of 2 ATP molecules into cyclic di-AMP (c-di-AMP). c-di-AMP acts as a signaling molecule that couples DNA integrity with progression of sporulation. The rise in c-di-AMP level generated by DisA while scanning the chromosome, operates as a positive signal that advances sporulation; upon encountering a lesion, the DisA focus arrests at the damaged site and halts c-di-AMP synthesis. In Clostridium beijerinckii (strain ATCC 51743 / NCIMB 8052) (Clostridium acetobutylicum), this protein is DNA integrity scanning protein DisA.